Here is a 162-residue protein sequence, read N- to C-terminus: Regulatory protein RecX (162 aa).

It belongs to the RecX family.

It localises to the cytoplasm. Its function is as follows. Modulates RecA activity. The chain is Regulatory protein RecX from Xanthomonas axonopodis pv. citri (strain 306).